We begin with the raw amino-acid sequence, 490 residues long: Aspartyl/glutamyl-tRNA(Asn/Gln) amidotransferase subunit B (490 aa).

This sequence belongs to the GatB/GatE family. GatB subfamily. In terms of assembly, heterotrimer of A, B and C subunits.

It catalyses the reaction L-glutamyl-tRNA(Gln) + L-glutamine + ATP + H2O = L-glutaminyl-tRNA(Gln) + L-glutamate + ADP + phosphate + H(+). The enzyme catalyses L-aspartyl-tRNA(Asn) + L-glutamine + ATP + H2O = L-asparaginyl-tRNA(Asn) + L-glutamate + ADP + phosphate + 2 H(+). Its function is as follows. Allows the formation of correctly charged Asn-tRNA(Asn) or Gln-tRNA(Gln) through the transamidation of misacylated Asp-tRNA(Asn) or Glu-tRNA(Gln) in organisms which lack either or both of asparaginyl-tRNA or glutaminyl-tRNA synthetases. The reaction takes place in the presence of glutamine and ATP through an activated phospho-Asp-tRNA(Asn) or phospho-Glu-tRNA(Gln). The protein is Aspartyl/glutamyl-tRNA(Asn/Gln) amidotransferase subunit B of Burkholderia thailandensis (strain ATCC 700388 / DSM 13276 / CCUG 48851 / CIP 106301 / E264).